The sequence spans 382 residues: Ribosomal RNA large subunit methyltransferase G (382 aa).

The protein belongs to the methyltransferase superfamily. RlmG family.

It localises to the cytoplasm. The catalysed reaction is guanosine(1835) in 23S rRNA + S-adenosyl-L-methionine = N(2)-methylguanosine(1835) in 23S rRNA + S-adenosyl-L-homocysteine + H(+). Its function is as follows. Specifically methylates the guanine in position 1835 (m2G1835) of 23S rRNA. This Psychromonas ingrahamii (strain DSM 17664 / CCUG 51855 / 37) protein is Ribosomal RNA large subunit methyltransferase G.